A 305-amino-acid polypeptide reads, in one-letter code: Peroxisome assembly protein 26 (305 aa).

Residues 1–25 (MKSDCSTSAAPFRGLGGPLRSSEPV) are disordered. The Cytoplasmic portion of the chain corresponds to 1 to 246 (MKSDCSTSAA…RQLWDSAVSH (246 aa)). The chain crosses the membrane as a helical; Signal-anchor for type II membrane protein span at residues 247–267 (FFSLPFKKSLLAALILCLLVV). Over 268–305 (RFDPASPSSLPSLYKLAQLFRWIRKAASSRLYQLRIRD) the chain is Peroxisomal matrix.

It belongs to the peroxin-26 family. In terms of assembly, interacts (via its cytoplasmic domain) with PEX6; interaction is direct and is ATP-dependent. Interacts with PEX1; interaction is indirect and is mediated via interaction with PEX6.

Its subcellular location is the peroxisome membrane. Peroxisomal docking factor that anchors PEX1 and PEX6 to peroxisome membranes. PEX26 is therefore required for the formation of the PEX1-PEX6 AAA ATPase complex, a complex that mediates the extraction of the PEX5 receptor from peroxisomal membrane. In Macaca fascicularis (Crab-eating macaque), this protein is Peroxisome assembly protein 26 (PEX26).